The chain runs to 349 residues: CCN family member 2 (349 aa).

An N-terminal signal peptide occupies residues 1–26 (MTAASMGPVRVAFVVLLALCSRPAVG). Positions 27–98 (QNCSGPCRCP…NRKIGVCTAK (72 aa)) constitute an IGFBP N-terminal domain. Asn-28 carries N-linked (GlcNAc...) asparagine glycosylation. Disulfide bonds link Cys-29–Cys-54, Cys-33–Cys-56, Cys-35–Cys-57, Cys-43–Cys-60, Cys-68–Cys-82, and Cys-74–Cys-95. Residues 101–167 (APCIFGGTVY…GKCCEEWVCD (67 aa)) form the VWFC domain. The region spanning 198–243 (NCLVQTTEWSACSKTCGMGISTRVTNDNASCRLEKQSRLCMVRPCE) is the TSP type-1 domain. N-linked (GlcNAc...) asparagine glycosylation is present at Asn-225. Residues 247–349 (EENIKKGKKC…YYRKMYGDMA (103 aa)) are heparin-binding. 5 disulfide bridges follow: Cys-256–Cys-293, Cys-273–Cys-307, Cys-284–Cys-323, Cys-287–Cys-325, and Cys-292–Cys-329. Residues 256–330 (CIRTPKISKP…KTCACHYNCP (75 aa)) enclose the CTCK domain.

The protein belongs to the CCN family. As to quaternary structure, monomer. Interacts with TSKU. Expressed in bone marrow and thymic cells. Also expressed one of two Wilms tumors tested.

The protein localises to the secreted. It is found in the extracellular space. The protein resides in the extracellular matrix. Functionally, major connective tissue mitoattractant secreted by vascular endothelial cells. Promotes proliferation and differentiation of chondrocytes. Is involved in the stimulation of osteoblast differentiation and has a critical role in osteogenesis. Mediates heparin- and divalent cation-dependent cell adhesion in many cell types including fibroblasts, myofibroblasts, endothelial and epithelial cells. Enhances fibroblast growth factor-induced DNA synthesis. In Homo sapiens (Human), this protein is CCN family member 2.